A 351-amino-acid chain; its full sequence is Centromere-binding protein 1 (351 aa).

An N-acetylmethionine modification is found at Met-1. Composition is skewed to polar residues over residues 1-10 (MNSLANNNKL), 43-52 (LLSQESNDGN), and 65-77 (KGTQSQYESGLTS). 3 disordered regions span residues 1–164 (MNSL…TQQS), 196–233 (KKDISMQPGRRGRKPTTLATTDEWKKQRKDSHKEVERR), and 327–351 (YEDMHTHKKQENERKSTRSDNPHEA). Residue Ser-45 is modified to Phosphoserine; by ATM or ATR. Ser-48 carries the phosphoserine modification. Ser-84 is modified (phosphoserine). 2 stretches are compositionally biased toward polar residues: residues 100–124 (VNYTDLIQGQEDSSDAHTSNQTNAN) and 138–164 (TPSNEGVKPNTSLEGMTSSPMESTQQS). Thr-138 is subject to Phosphothreonine. Residues 222–270 (QRKDSHKEVERRRRENINTAINVLSDLLPVRESSKAAILACAAEYIQKL) enclose the bHLH domain.

As to quaternary structure, binds DNA as a dimer. Associates with MET4 to form a heteromeric complex which also includes MET28.

The protein localises to the nucleus. The protein resides in the mitochondrion. It localises to the chromosome. It is found in the centromere. In terms of biological role, required for chromosome stability and methionine prototrophy. It is involved in chromosomal segregation. Binds to a highly conserved DNA sequence (5'-RTCACRTG-3'), called CDEI, found in centromeres and in several promoters. DNA-binding activity is enhanced by MET28. Required as an auxiliary factor for transcriptional activation of sulfur metabolism together with MET4 and MET28. This Saccharomyces cerevisiae (strain ATCC 204508 / S288c) (Baker's yeast) protein is Centromere-binding protein 1 (CBF1).